The sequence spans 77 residues: Large ribosomal subunit protein uL24 (77 aa).

It belongs to the universal ribosomal protein uL24 family. Part of the 50S ribosomal subunit.

Its function is as follows. One of two assembly initiator proteins, it binds directly to the 5'-end of the 23S rRNA, where it nucleates assembly of the 50S subunit. In terms of biological role, one of the proteins that surrounds the polypeptide exit tunnel on the outside of the subunit. This Campylobacter jejuni subsp. jejuni serotype O:6 (strain 81116 / NCTC 11828) protein is Large ribosomal subunit protein uL24.